A 600-amino-acid polypeptide reads, in one-letter code: Kelch-like protein 24 (600 aa).

In terms of domain architecture, BTB spans 66–133 (TDVIICVEGK…VYTGKVKITT (68 aa)). The 103-residue stretch at 168 to 270 (CLGIQRFADT…HPNYFVQTVE (103 aa)) folds into the BACK domain. Kelch repeat units follow at residues 314-363 (VIVV…ALRN), 365-407 (ILVS…VLLG), 408-454 (KVYV…SCIG), 456-502 (LFVI…SLNN), 504-544 (IYVA…VCNG), and 546-592 (IYIL…TIHR).

As to quaternary structure, forms homodimers. Interacts with GRIK2. Component of the BCR(KLHL24) E3 ubiquitin ligase complex, composed of CUL3, RBX1 and KLHL24. Interacts with CUL3. Interacts with KRT14. In terms of processing, autoubiquitinated. Autoubiquitination leads to proteasomal degradation and is necessary to control KLHL24 levels. Expressed in the brain.

Its subcellular location is the perikaryon. The protein resides in the cell projection. It is found in the axon. The protein localises to the cytoplasm. It localises to the cell junction. Its subcellular location is the desmosome. The protein resides in the adherens junction. Functionally, controls KRT14 levels during keratinocytes differentiation. As part of the BCR(KLHL24) E3 ubiquitin ligase complex, mediates ubiquitination of KRT14. Specifically reduces kainate receptor-mediated currents in hippocampal neurons, most probably by modulating channel properties. Has a crucial role in cardiac development and function. This Mus musculus (Mouse) protein is Kelch-like protein 24 (Klhl24).